A 170-amino-acid polypeptide reads, in one-letter code: Adenine phosphoribosyltransferase (170 aa).

It belongs to the purine/pyrimidine phosphoribosyltransferase family. In terms of assembly, homodimer.

It is found in the cytoplasm. The enzyme catalyses AMP + diphosphate = 5-phospho-alpha-D-ribose 1-diphosphate + adenine. It functions in the pathway purine metabolism; AMP biosynthesis via salvage pathway; AMP from adenine: step 1/1. In terms of biological role, catalyzes a salvage reaction resulting in the formation of AMP, that is energically less costly than de novo synthesis. The chain is Adenine phosphoribosyltransferase from Nitrosopumilus maritimus (strain SCM1).